Here is a 227-residue protein sequence, read N- to C-terminus: Octanoyltransferase (227 aa).

The 179-residue stretch at 31-209 (ANTIDEIWLV…VFLSLLGGTN (179 aa)) folds into the BPL/LPL catalytic domain. Substrate contacts are provided by residues 71 to 78 (RGGKITYH), 139 to 141 (SIG), and 152 to 154 (GLA). Residue C170 is the Acyl-thioester intermediate of the active site.

It belongs to the LipB family.

The protein localises to the cytoplasm. The enzyme catalyses octanoyl-[ACP] + L-lysyl-[protein] = N(6)-octanoyl-L-lysyl-[protein] + holo-[ACP] + H(+). It participates in protein modification; protein lipoylation via endogenous pathway; protein N(6)-(lipoyl)lysine from octanoyl-[acyl-carrier-protein]: step 1/2. Functionally, catalyzes the transfer of endogenously produced octanoic acid from octanoyl-acyl-carrier-protein onto the lipoyl domains of lipoate-dependent enzymes. Lipoyl-ACP can also act as a substrate although octanoyl-ACP is likely to be the physiological substrate. This chain is Octanoyltransferase, found in Baumannia cicadellinicola subsp. Homalodisca coagulata.